Consider the following 711-residue polypeptide: MLKKKAKTKSSSKKWSSFKNARSMHVLLYLLLAAIMFALLFVHVKPETLDLDLFSVSDKTIYAPATVEDQKATEEKKQAAEDAVEDQYTLKKEYTDNRIDLVSSIFDSISEVKKSSEEGSKSPSEKSMVKSVKDKLTSDVNDSISEDSIKTLLKADSEDFSFVRDTVITAVNTVMSSEIPSDKLSDAKDKVEKELKSNSIPSKYLGAATEIGRFAIIPNYVFDPKATEAKRQEASDNVQQVQIKQGQVLVEENDLIDREVYRKLELTGLLNNSNLFKPISGLLIMIGLFIATLVYYFEKQKQNLKFKNQSILLFSIITTLLLVIMEVVSLFQKMEYNNIGYLVPIAAGAILIKLLMNERIAILGSIILAICGSMMFNQGVTGTFNYVIGIYYLISGISGVLFLGKHNARSKILQTGLFVAFINMVVVLSLLLIQNTALSGLEIGTLMLMGVVSGFASSVLIIGLMPFFETGFGILSTMRLLELSNPNHPLLRKILTETPGTYHHSVMVANLSEAACEAVGANGLLARVGAYYHDLGKTKRPQYFIENQMNIDNPHDKLSPQLSKNIIISHTTDGANMLRSYKFPKELVDIAEQHHGTSLLKFFYYKAKEKGDQITEEEFRYPGPKPQSKEAAIISVADSVEAAVRSMHNPNPERIEKLVRGIISDKLQDGQFSECDLTFKELDTIAKTLCATLKGIFHSRIEYPEATKKVK.

The disordered stretch occupies residues 114 to 133; that stretch reads KSSEEGSKSPSEKSMVKSVK. Helical transmembrane passes span 275-295, 311-331, 336-356, 360-380, 384-404, 413-433, and 448-468; these read LFKP…TLVY, ILLF…VSLF, YNNI…KLLM, IAIL…NQGV, FNYV…LFLG, LQTG…LLLI, and LMGV…MPFF. The HD domain maps to 501–643; that stretch reads TYHHSVMVAN…ISVADSVEAA (143 aa). Residues histidine 504, histidine 533, aspartate 534, histidine 570, histidine 594, and histidine 595 each contribute to the Mn(2+) site. Histidine 504 is a binding site for substrate. Residues tyrosine 621 and aspartate 638 each contribute to the substrate site. Aspartate 638 lines the Mn(2+) pocket.

Belongs to the PgpH phosphodiesterase family. Mn(2+) serves as cofactor.

The protein resides in the cell membrane. It catalyses the reaction 3',3'-c-di-AMP + H2O = 5'-O-phosphonoadenylyl-(3'-&gt;5')-adenosine + H(+). In terms of biological role, probably has phosphodiesterase (PDE) activity against cyclic-di-AMP (c-di-AMP); may be the major c-di-AMP PDE in the cell. In B.subtilis c-di-AMP is a second messenger that mediates growth, DNA repair and cell wall homeostasis; it is toxic when present in excess. In Bacillus subtilis (strain 168), this protein is Cyclic-di-AMP phosphodiesterase PgpH.